Here is an 80-residue protein sequence, read N- to C-terminus: MKTTILILLILGLGINAKSLEERKSEEEKVFQFLGKIIHHVGNFVHGFSHVFGDDQQDNGKFYGHYAEDNGKHWYDTGDQ.

A signal peptide spans 1 to 19; it reads MKTTILILLILGLGINAKS. Residues 20-29 constitute a propeptide that is removed on maturation; the sequence is LEERKSEEEK. Phenylalanine 52 is subject to Phenylalanine amide. Positions 54 to 80 are excised as a propeptide; it reads DDQQDNGKFYGHYAEDNGKHWYDTGDQ.

It is found in the secreted. In terms of biological role, has antimicrobial activity. In Styela clava (Sea squirt), this protein is Clavanin-A.